The sequence spans 593 residues: uncharacterized protein (593 aa).

12 helical membrane passes run 21-41 (PAVF…SVVY), 60-80 (VGWW…YCGI), 97-117 (FSFW…GLVF), 148-168 (MALT…VVGL), 204-224 (VDVI…GFGI), 243-263 (WMVG…VSGV), 275-295 (MALA…LFLL), 328-348 (WTIF…MFIA), 359-379 (FIGA…TIFG), 410-430 (GLPI…FFFV), 457-477 (VYWA…GGAG), and 485-505 (AAIA…YAMT).

It belongs to the BCCT transporter (TC 2.A.15) family.

The protein localises to the cell membrane. This is an uncharacterized protein from Mycobacterium tuberculosis (strain CDC 1551 / Oshkosh).